We begin with the raw amino-acid sequence, 211 residues long: Ribosomal RNA small subunit methyltransferase G (211 aa).

S-adenosyl-L-methionine contacts are provided by residues glycine 72, phenylalanine 77, 125-126 (IE), and arginine 141.

This sequence belongs to the methyltransferase superfamily. RNA methyltransferase RsmG family.

The protein localises to the cytoplasm. It catalyses the reaction guanosine(527) in 16S rRNA + S-adenosyl-L-methionine = N(7)-methylguanosine(527) in 16S rRNA + S-adenosyl-L-homocysteine. Its function is as follows. Specifically methylates the N7 position of guanine in position 527 of 16S rRNA. The chain is Ribosomal RNA small subunit methyltransferase G from Allorhizobium ampelinum (strain ATCC BAA-846 / DSM 112012 / S4) (Agrobacterium vitis (strain S4)).